Reading from the N-terminus, the 384-residue chain is Probable zinc-binding alcohol dehydrogenase Rv1895 (384 aa).

Residues C38, H59, C89, C92, C95, and C103 each coordinate Zn(2+).

The protein belongs to the zinc-containing alcohol dehydrogenase family. Zn(2+) is required as a cofactor.

The catalysed reaction is a primary alcohol + NAD(+) = an aldehyde + NADH + H(+). It carries out the reaction a secondary alcohol + NAD(+) = a ketone + NADH + H(+). The polypeptide is Probable zinc-binding alcohol dehydrogenase Rv1895 (Mycobacterium tuberculosis (strain ATCC 25618 / H37Rv)).